Reading from the N-terminus, the 445-residue chain is Serine/threonine-protein kinase Nek2 (445 aa).

The region spanning 8-271 (YEVLYTIGTG…VEEILENPLI (264 aa)) is the Protein kinase domain. ATP is bound by residues 14 to 22 (IGTGSYGRC) and Lys-37. The active-site Proton acceptor is Asp-141. A Phosphothreonine; by autocatalysis modification is found at Thr-170. Residue Ser-171 is modified to Phosphoserine; by autocatalysis. Thr-175 and Thr-179 each carry phosphothreonine; by autocatalysis. Ser-184 carries the phosphoserine modification. A Phosphoserine; by autocatalysis modification is found at Ser-241. Residues 264 to 445 (EILENPLIAD…LKSRQILGMR (182 aa)) are interaction with PCNT. Residues Ser-296 and Ser-300 each carry the phosphoserine modification. An interaction with CEP85 region spans residues 301–445 (PVLSELKLKE…LKSRQILGMR (145 aa)). Positions 303–362 (LSELKLKEIQLQERERALKAREERLEQKEQELCVRERLAEDKLARAENLLKNYSLLKERK) form a coiled coil. A leucine-zipper region spans residues 306-334 (LKLKEIQLQERERALKAREERLEQKEQEL). The interval 329-445 (QKEQELCVRE…LKSRQILGMR (117 aa)) is necessary for interaction with MAD1L1. The interval 333–370 (ELCVRERLAEDKLARAENLLKNYSLLKERKFLSLASNP) is required for microtubule binding and for localization to the centrosomes. Residues Ser-356 and Ser-365 each carry the phosphoserine; by STK3/MST2 modification. Phosphoserine occurs at positions 387, 390, 397, and 402. Residues 403–439 (QLTSKSKCKDLKKRLHAAQLRAQALSDIEKNYQLKSR) form an interaction with SAV1 and STK3/MST2 region. Ser-406 carries the post-translational modification Phosphoserine; by STK3/MST2. A coiled-coil region spans residues 406–430 (SKSKCKDLKKRLHAAQLRAQALSDI). Ser-428 carries the post-translational modification Phosphoserine. Ser-438 is subject to Phosphoserine; by STK3/MST2.

It belongs to the protein kinase superfamily. NEK Ser/Thr protein kinase family. NIMA subfamily. In terms of assembly, isoform 1, isoform 2 and isoform 4 form homo- and heterodimers. Interacts with NECAB3 and HMGA2. Isoform 1 interacts with CDC20, CTNB1, MAD1L1, MAPK, NEK11, NPM1, NDC80, PCNT and SGO1. Isoform 1 interacts with STK3/MST2 (via SARAH domain) and SAV1 (via SARAH domain). Isoform 1 and isoform 2 interact with MAD2L1. Isoform 1 and isoform 4 interact with PPP1CA and PPP1CC. Interacts with CEP68; the interaction leads to phosphorylation of CEP68. Interacts with CNTLN; the interaction leads to phosphorylation of CNTLN. Isoform 1 interacts with CEP85. Interacts with CCDC102B; the interaction leads to phosphorylation of CCDC102B. Requires Mg(2+) as cofactor. Activated by autophosphorylation. Protein phosphatase 1 represses autophosphorylation and activation of isoform 1 by dephosphorylation. Phosphorylation by STK3/MST2 is necessary for its localization to the centrosome. Isoform 1 and isoform 2 are expressed in peripheral blood T-cells and a wide variety of transformed cell types. Isoform 1 and isoform 4 are expressed in the testis. Up-regulated in various cancer cell lines, as well as primary breast tumors.

It localises to the nucleus. The protein localises to the nucleolus. The protein resides in the cytoplasm. It is found in the cytoskeleton. Its subcellular location is the microtubule organizing center. It localises to the centrosome. The protein localises to the spindle pole. The protein resides in the chromosome. It is found in the centromere. Its subcellular location is the kinetochore. It catalyses the reaction L-seryl-[protein] + ATP = O-phospho-L-seryl-[protein] + ADP + H(+). The enzyme catalyses L-threonyl-[protein] + ATP = O-phospho-L-threonyl-[protein] + ADP + H(+). With respect to regulation, isoform 1 is inhibited by ionizing radiation in the presence of PPP1CA. Its catalytic activity is inhibited by the inhibitor CCT241950. In the presence of this inhibitor, displays an autoinhibited conformation: Tyr-70 side chain points into the active site, interacts with the activation loop, and blocks the alphaC helix. Protein kinase which is involved in the control of centrosome separation and bipolar spindle formation in mitotic cells and chromatin condensation in meiotic cells. Regulates centrosome separation (essential for the formation of bipolar spindles and high-fidelity chromosome separation) by phosphorylating centrosomal proteins such as CROCC, CEP250 and NINL, resulting in their displacement from the centrosomes. Regulates kinetochore microtubule attachment stability in mitosis via phosphorylation of NDC80. Involved in regulation of mitotic checkpoint protein complex via phosphorylation of CDC20 and MAD2L1. Plays an active role in chromatin condensation during the first meiotic division through phosphorylation of HMGA2. Phosphorylates: PPP1CC; SGO1; NECAB3 and NPM1. Essential for localization of MAD2L1 to kinetochore and MAPK1 and NPM1 to the centrosome. Phosphorylates CEP68 and CNTLN directly or indirectly. NEK2-mediated phosphorylation of CEP68 promotes CEP68 dissociation from the centrosome and its degradation at the onset of mitosis. Involved in the regulation of centrosome disjunction. Phosphorylates CCDC102B either directly or indirectly which causes CCDC102B to dissociate from the centrosome and allows for centrosome separation. In terms of biological role, phosphorylates and activates NEK11 in G1/S-arrested cells. Its function is as follows. Not present in the nucleolus and, in contrast to isoform 1, does not phosphorylate and activate NEK11 in G1/S-arrested cells. The sequence is that of Serine/threonine-protein kinase Nek2 (NEK2) from Homo sapiens (Human).